The primary structure comprises 386 residues: Trichocyst matrix protein T2-B (386 aa).

The first 19 residues, 1 to 19 (MKTIILALALIALVSSTQS), serve as a signal peptide directing secretion. A propeptide spanning residues 20 to 48 (DVIDTIKKIDQSPFGRTLFDTIWLELQTG) is cleaved from the precursor. Residues 51-154 (LDRLVSTLTD…AEEHEDFEEK (104 aa)) are a coiled coil. A propeptide spanning residues 184 to 238 (KGKAAKQPHKFTKDVANLIQKHFTTSAKKTAKFQHRKGYSKLFKAFATIASKVEQ) is cleaved from the precursor. Residues 294-325 (ALANAISDLAALNDIIAQVEASLDTTVQRIEN) are a coiled coil.

This sequence belongs to the TMP family.

The protein resides in the trichocyst. Structural protein that crystallize inside the trichocyst matrix. In Paramecium tetraurelia, this protein is Trichocyst matrix protein T2-B (T2B).